We begin with the raw amino-acid sequence, 141 residues long: Hemoglobin subunit alpha-1/2 (141 aa).

The region spanning 1–141 (VLSPADKTNV…VSTVLTSKYR (141 aa)) is the Globin domain. Phosphoserine is present on Ser3. Lys7 carries the N6-succinyllysine modification. The residue at position 8 (Thr8) is a Phosphothreonine. At Lys11 the chain carries N6-succinyllysine. Residue Lys16 is modified to N6-acetyllysine; alternate. Residue Lys16 is modified to N6-succinyllysine; alternate. At Tyr24 the chain carries Phosphotyrosine. Ser35 carries the post-translational modification Phosphoserine. Lys40 carries the post-translational modification N6-succinyllysine. Ser49 carries the phosphoserine modification. Position 58 (His58) interacts with O2. His87 lines the heme b pocket. Ser102 is subject to Phosphoserine. Thr108 bears the Phosphothreonine mark. Ser124 and Ser131 each carry phosphoserine. Thr134 and Thr137 each carry phosphothreonine. A Phosphoserine modification is found at Ser138.

This sequence belongs to the globin family. In terms of assembly, heterotetramer of two alpha chains and two beta chains. Red blood cells.

Functionally, involved in oxygen transport from the lung to the various peripheral tissues. This chain is Hemoglobin subunit alpha-1/2, found in Macaca speciosa (Stump-tail macaque).